Here is a 69-residue protein sequence, read N- to C-terminus: Large ribosomal subunit protein uL29 (69 aa).

This sequence belongs to the universal ribosomal protein uL29 family.

The polypeptide is Large ribosomal subunit protein uL29 (Methylobacillus flagellatus (strain ATCC 51484 / DSM 6875 / VKM B-1610 / KT)).